A 159-amino-acid polypeptide reads, in one-letter code: Putative viral CXC chemokine 2 (159 aa).

2 disulfide bridges follow: Cys50-Cys77 and Cys52-Cys93.

The protein belongs to the intercrine alpha (chemokine CxC) family.

The polypeptide is Putative viral CXC chemokine 2 (UL147) (Human cytomegalovirus (strain Merlin) (HHV-5)).